We begin with the raw amino-acid sequence, 534 residues long: CTP synthase (534 aa).

Positions 1-266 (MKTKFLFITG…DERIIDYLNI (266 aa)) are amidoligase domain. Serine 14 provides a ligand contact to CTP. Serine 14 contacts UTP. ATP contacts are provided by residues 15–20 (SLGKGL) and aspartate 72. Mg(2+) contacts are provided by aspartate 72 and glutamate 140. CTP is bound by residues 147–149 (DIE), 187–192 (KTKPTQ), and lysine 223. UTP contacts are provided by residues 187–192 (KTKPTQ) and lysine 223. 239–241 (RDV) provides a ligand contact to ATP. The 243-residue stretch at 291-533 (TIAIVGKYVE…VGASLKHHGE (243 aa)) folds into the Glutamine amidotransferase type-1 domain. Glycine 353 lines the L-glutamine pocket. Cysteine 380 acts as the Nucleophile; for glutamine hydrolysis in catalysis. L-glutamine-binding positions include 381-384 (LGMQ), glutamate 404, and arginine 461. Catalysis depends on residues histidine 506 and glutamate 508.

It belongs to the CTP synthase family. As to quaternary structure, homotetramer.

It carries out the reaction UTP + L-glutamine + ATP + H2O = CTP + L-glutamate + ADP + phosphate + 2 H(+). The enzyme catalyses L-glutamine + H2O = L-glutamate + NH4(+). The catalysed reaction is UTP + NH4(+) + ATP = CTP + ADP + phosphate + 2 H(+). Its pathway is pyrimidine metabolism; CTP biosynthesis via de novo pathway; CTP from UDP: step 2/2. Its activity is regulated as follows. Allosterically activated by GTP, when glutamine is the substrate; GTP has no effect on the reaction when ammonia is the substrate. The allosteric effector GTP functions by stabilizing the protein conformation that binds the tetrahedral intermediate(s) formed during glutamine hydrolysis. Inhibited by the product CTP, via allosteric rather than competitive inhibition. Functionally, catalyzes the ATP-dependent amination of UTP to CTP with either L-glutamine or ammonia as the source of nitrogen. Regulates intracellular CTP levels through interactions with the four ribonucleotide triphosphates. The sequence is that of CTP synthase from Syntrophotalea carbinolica (strain DSM 2380 / NBRC 103641 / GraBd1) (Pelobacter carbinolicus).